Here is a 332-residue protein sequence, read N- to C-terminus: D-galactose/methyl-galactoside binding periplasmic protein MglB (332 aa).

Residues 1 to 23 form the signal peptide; sequence MNKKVLTLSAVMASLLFGAHAHA. Positions 37 and 114 each coordinate beta-D-galactose. Beta-D-glucose-binding residues include Asp37 and Asn114. Positions 157, 159, 161, 163, and 165 each coordinate Ca(2+). Beta-D-galactose is bound by residues His175, Asp177, and Arg181. His175, Asp177, and Arg181 together coordinate beta-D-glucose. Ca(2+) is bound at residue Glu228. 3 residues coordinate beta-D-galactose: Asn234, Asp259, and Asn279. Beta-D-glucose is bound by residues Asn234, Asp259, and Asn279.

This sequence belongs to the bacterial solute-binding protein 2 family. As to quaternary structure, the ABC transporter complex is composed of one ATP-binding protein (MglA), two transmembrane proteins (MglC) and a solute-binding protein (MglB).

It localises to the periplasm. Part of the ABC transporter complex MglABC involved in galactose/methyl galactoside import. In addition, binds D-galactose and D-glucose and plays a role in the chemotaxis towards these two sugars by interacting with the Trg chemoreceptor. This is D-galactose/methyl-galactoside binding periplasmic protein MglB (mglB) from Salmonella typhimurium (strain LT2 / SGSC1412 / ATCC 700720).